We begin with the raw amino-acid sequence, 301 residues long: GTPase Era (301 aa).

The Era-type G domain maps to 7-175 (YCGFIAIVGR…AAIVRKHLPE (169 aa)). Residues 15 to 22 (GRPNVGKS) form a G1 region. Position 15 to 22 (15 to 22 (GRPNVGKS)) interacts with GTP. Positions 41–45 (QTTRH) are G2. Residues 62 to 65 (DTPG) form a G3 region. Residues 62-66 (DTPGL) and 124-127 (NKVD) contribute to the GTP site. The tract at residues 124 to 127 (NKVD) is G4. The G5 stretch occupies residues 154–156 (ISA). Residues 206-283 (LGAELPYSVT…HLELWVKVKS (78 aa)) enclose the KH type-2 domain.

This sequence belongs to the TRAFAC class TrmE-Era-EngA-EngB-Septin-like GTPase superfamily. Era GTPase family. As to quaternary structure, monomer.

Its subcellular location is the cytoplasm. The protein localises to the cell inner membrane. Its function is as follows. An essential GTPase that binds both GDP and GTP, with rapid nucleotide exchange. Plays a role in 16S rRNA processing and 30S ribosomal subunit biogenesis and possibly also in cell cycle regulation and energy metabolism. The polypeptide is GTPase Era (Shigella flexneri).